The sequence spans 278 residues: Indole-3-glycerol phosphate synthase (278 aa).

The protein belongs to the TrpC family.

The catalysed reaction is 1-(2-carboxyphenylamino)-1-deoxy-D-ribulose 5-phosphate + H(+) = (1S,2R)-1-C-(indol-3-yl)glycerol 3-phosphate + CO2 + H2O. It participates in amino-acid biosynthesis; L-tryptophan biosynthesis; L-tryptophan from chorismate: step 4/5. This Pseudomonas fluorescens (strain Pf0-1) protein is Indole-3-glycerol phosphate synthase.